Here is a 156-residue protein sequence, read N- to C-terminus: 6,7-dimethyl-8-ribityllumazine synthase (156 aa).

Residues Phe23, 57 to 59 (AYE), and 81 to 83 (AII) each bind 5-amino-6-(D-ribitylamino)uracil. Residue 86–87 (GT) coordinates (2S)-2-hydroxy-3-oxobutyl phosphate. Residue His89 is the Proton donor of the active site. 5-amino-6-(D-ribitylamino)uracil is bound at residue Phe114. (2S)-2-hydroxy-3-oxobutyl phosphate is bound at residue Arg128.

It belongs to the DMRL synthase family.

It catalyses the reaction (2S)-2-hydroxy-3-oxobutyl phosphate + 5-amino-6-(D-ribitylamino)uracil = 6,7-dimethyl-8-(1-D-ribityl)lumazine + phosphate + 2 H2O + H(+). It functions in the pathway cofactor biosynthesis; riboflavin biosynthesis; riboflavin from 2-hydroxy-3-oxobutyl phosphate and 5-amino-6-(D-ribitylamino)uracil: step 1/2. Its function is as follows. Catalyzes the formation of 6,7-dimethyl-8-ribityllumazine by condensation of 5-amino-6-(D-ribitylamino)uracil with 3,4-dihydroxy-2-butanone 4-phosphate. This is the penultimate step in the biosynthesis of riboflavin. In Helicobacter pylori (strain Shi470), this protein is 6,7-dimethyl-8-ribityllumazine synthase.